Here is a 565-residue protein sequence, read N- to C-terminus: Adenine deaminase (565 aa).

This sequence belongs to the metallo-dependent hydrolases superfamily. Adenine deaminase family. It depends on Mn(2+) as a cofactor.

It catalyses the reaction adenine + H2O + H(+) = hypoxanthine + NH4(+). The polypeptide is Adenine deaminase (Lactobacillus delbrueckii subsp. bulgaricus (strain ATCC 11842 / DSM 20081 / BCRC 10696 / JCM 1002 / NBRC 13953 / NCIMB 11778 / NCTC 12712 / WDCM 00102 / Lb 14)).